We begin with the raw amino-acid sequence, 634 residues long: Nucleoside triphosphatase I (634 aa).

The Helicase ATP-binding domain maps to 41 to 203 (FLGLDSMNSL…ALLVNLLRPG (163 aa)). 54-61 (QETGVGKT) lines the ATP pocket. The DEXH box motif lies at 140–143 (DECH). The Helicase C-terminal domain maps to 355–531 (SLYQALYEHS…EFSQLYRVLK (177 aa)). A binding to the cap-specific mRNA (nucleoside-2'-O-)-methyltransferase region spans residues 456-523 (DIFILDMTWN…EIIQNKAREF (68 aa)).

Belongs to the helicase family. NPH I subfamily. As to quaternary structure, monomer. Interacts (via C-terminus) with RAP94 (via N-terminus). Interacts with the cap-specific mRNA (nucleoside-2'-O-)-methyltransferase.

The protein localises to the virion. The enzyme catalyses a ribonucleoside 5'-triphosphate + H2O = a ribonucleoside 5'-diphosphate + phosphate + H(+). DNA-dependent ATPase required for providing the needed energy to achieve the termination of early transcripts. Acts in concert with the RAP94 subunit of the virion RNA polymerase and the capping enzyme/VTF to catalyze release of UUUUUNU-containing nascent RNA from the elongation complex. NPH-I must bind ssDNA in order to exhibit ATPase activity. This Homo sapiens (Human) protein is Nucleoside triphosphatase I (NPH1).